The following is a 691-amino-acid chain: Elongation factor G (691 aa).

The tr-type G domain occupies 8-282 (ERVRNIGIAA…AVVDYLPAPV (275 aa)). GTP-binding positions include 17–24 (AHIDAGKT), 81–85 (DTPGH), and 135–138 (NKMD).

It belongs to the TRAFAC class translation factor GTPase superfamily. Classic translation factor GTPase family. EF-G/EF-2 subfamily.

It is found in the cytoplasm. Its function is as follows. Catalyzes the GTP-dependent ribosomal translocation step during translation elongation. During this step, the ribosome changes from the pre-translocational (PRE) to the post-translocational (POST) state as the newly formed A-site-bound peptidyl-tRNA and P-site-bound deacylated tRNA move to the P and E sites, respectively. Catalyzes the coordinated movement of the two tRNA molecules, the mRNA and conformational changes in the ribosome. The sequence is that of Elongation factor G from Prochlorococcus marinus (strain MIT 9211).